We begin with the raw amino-acid sequence, 438 residues long: GTPase Obg (438 aa).

The region spanning 2 to 160 (NMFVDQIKIE…HYLELELKML (159 aa)) is the Obg domain. In terms of domain architecture, OBG-type G spans 161 to 337 (ADVGLIGFPS…LMQLTADLLD (177 aa)). GTP-binding positions include 167–174 (GFPSVGKS), 192–196 (FTTLT), 214–217 (DMPG), 284–287 (TKMD), and 318–320 (SAV). Mg(2+) contacts are provided by S174 and T194. An OCT domain is found at 360–438 (PDKKDEADFT…IEKFVFEFIQ (79 aa)).

It belongs to the TRAFAC class OBG-HflX-like GTPase superfamily. OBG GTPase family. In terms of assembly, monomer. It depends on Mg(2+) as a cofactor.

It localises to the cytoplasm. In terms of biological role, an essential GTPase which binds GTP, GDP and possibly (p)ppGpp with moderate affinity, with high nucleotide exchange rates and a fairly low GTP hydrolysis rate. Plays a role in control of the cell cycle, stress response, ribosome biogenesis and in those bacteria that undergo differentiation, in morphogenesis control. This Limosilactobacillus reuteri (strain DSM 20016) (Lactobacillus reuteri) protein is GTPase Obg.